Here is a 314-residue protein sequence, read N- to C-terminus: Citrate/oxoglutarate carrier protein (314 aa).

Solcar repeat units follow at residues Val18–Tyr100, Leu107–Gly199, and Glu217–Phe301. A run of 5 helical transmembrane segments spans residues Ile23 to Val44, Ile77 to Glu97, Ala111 to Leu127, Val178 to Asp198, and Lys218 to Ile238. A DNA-binding region spans residues Lys246–Lys259. Residues Leu273–Phe294 form a helical membrane-spanning segment.

Belongs to the mitochondrial carrier (TC 2.A.29) family.

The protein resides in the mitochondrion inner membrane. Its subcellular location is the mitochondrion matrix. The protein localises to the mitochondrion nucleoid. Strongly inhibited by mersalyl, p-chloromercuribenzenesulfonate, mercuric chloride, N-ethylmaleimide, pyridoxal 5'-phosphate, bathophenanthroline, and tannic acid. Partially inhibited by alpha-cyanocinnamate and bromescol purple. Weakly inhibited by butylmalonate and phenylsuccinate. Not inhibited by 1,2,3-benzenetricarboxylate or carboxyatractyloside. In terms of biological role, mitochondrial antiporter which catalyzes the transport of citrate and oxoglutarate across the membrane. Also shows specificity for oxaloacetate, and to a lesser extent succinate and fumarate. Transports isocitrate, cis-aconitate and L-malate with very low efficiency. Does not show uniporter activity. Helps to maintain normal citrate levels and NADPH/NADP(+) ratios under conditions of oxidative stress. In addition, associates with the mitochondrial nucleoid and binds DNA in vitro, although the relevance of these data in vivo is unclear. The sequence is that of Citrate/oxoglutarate carrier protein (YHM2) from Saccharomyces cerevisiae (strain ATCC 204508 / S288c) (Baker's yeast).